We begin with the raw amino-acid sequence, 201 residues long: Recombination protein RecR (201 aa).

Residues 60 to 75 (CSCCGNVDTIDPCTVC) form a C4-type zinc finger. The region spanning 83 to 178 (AVIIVVEDVA…RITRLAHGVP (96 aa)) is the Toprim domain.

Belongs to the RecR family.

In terms of biological role, may play a role in DNA repair. It seems to be involved in an RecBC-independent recombinational process of DNA repair. It may act with RecF and RecO. The polypeptide is Recombination protein RecR (Rhizobium meliloti (strain 1021) (Ensifer meliloti)).